The chain runs to 495 residues: Galactose-1-phosphate uridylyltransferase (495 aa).

Belongs to the galactose-1-phosphate uridylyltransferase type 2 family.

The protein localises to the cytoplasm. The enzyme catalyses alpha-D-galactose 1-phosphate + UDP-alpha-D-glucose = alpha-D-glucose 1-phosphate + UDP-alpha-D-galactose. It participates in carbohydrate metabolism; galactose metabolism. The sequence is that of Galactose-1-phosphate uridylyltransferase from Ligilactobacillus salivarius (strain UCC118) (Lactobacillus salivarius).